The primary structure comprises 190 residues: Crossover junction endodeoxyribonuclease RuvC (190 aa).

Catalysis depends on residues Asp7, Glu67, and Asp140. Residues Asp7, Glu67, and Asp140 each coordinate Mg(2+).

It belongs to the RuvC family. In terms of assembly, homodimer which binds Holliday junction (HJ) DNA. The HJ becomes 2-fold symmetrical on binding to RuvC with unstacked arms; it has a different conformation from HJ DNA in complex with RuvA. In the full resolvosome a probable DNA-RuvA(4)-RuvB(12)-RuvC(2) complex forms which resolves the HJ. Mg(2+) serves as cofactor.

It is found in the cytoplasm. The catalysed reaction is Endonucleolytic cleavage at a junction such as a reciprocal single-stranded crossover between two homologous DNA duplexes (Holliday junction).. Its function is as follows. The RuvA-RuvB-RuvC complex processes Holliday junction (HJ) DNA during genetic recombination and DNA repair. Endonuclease that resolves HJ intermediates. Cleaves cruciform DNA by making single-stranded nicks across the HJ at symmetrical positions within the homologous arms, yielding a 5'-phosphate and a 3'-hydroxyl group; requires a central core of homology in the junction. The consensus cleavage sequence is 5'-(A/T)TT(C/G)-3'. Cleavage occurs on the 3'-side of the TT dinucleotide at the point of strand exchange. HJ branch migration catalyzed by RuvA-RuvB allows RuvC to scan DNA until it finds its consensus sequence, where it cleaves and resolves the cruciform DNA. This is Crossover junction endodeoxyribonuclease RuvC from Fusobacterium nucleatum subsp. nucleatum (strain ATCC 25586 / DSM 15643 / BCRC 10681 / CIP 101130 / JCM 8532 / KCTC 2640 / LMG 13131 / VPI 4355).